A 429-amino-acid chain; its full sequence is Trigger factor (429 aa).

The 86-residue stretch at 162–247 (DDTVDLAFEG…INAIKKLRQP (86 aa)) folds into the PPIase FKBP-type domain.

It belongs to the FKBP-type PPIase family. Tig subfamily.

The protein localises to the cytoplasm. The catalysed reaction is [protein]-peptidylproline (omega=180) = [protein]-peptidylproline (omega=0). Involved in protein export. Acts as a chaperone by maintaining the newly synthesized protein in an open conformation. Functions as a peptidyl-prolyl cis-trans isomerase. In Fusobacterium nucleatum subsp. nucleatum (strain ATCC 25586 / DSM 15643 / BCRC 10681 / CIP 101130 / JCM 8532 / KCTC 2640 / LMG 13131 / VPI 4355), this protein is Trigger factor.